We begin with the raw amino-acid sequence, 347 residues long: 3-keto-steroid reductase ERG27 (347 aa).

Residues leucine 15, threonine 38, and arginine 44 each coordinate NADP(+). Catalysis depends on proton donor residues serine 179 and tyrosine 202. NADP(+)-binding residues include tyrosine 202, lysine 206, and serine 237. Catalysis depends on lysine 206, which acts as the Lowers pKa of active site Tyr. A Phosphothreonine modification is found at threonine 345.

It belongs to the short-chain dehydrogenases/reductases (SDR) family. ERG27 subfamily. In terms of assembly, heterotetramer of ERG25, ERG26, ERG27 and ERG28. ERG28 acts as a scaffold to tether ERG27 and other 4,4-demethylation-related enzymes, forming a demethylation enzyme complex, in the endoplasmic reticulum. Interacts with ERG25 and ERG28. Also interacts with ERG7, but only in lipid particles.

It is found in the endoplasmic reticulum membrane. The protein resides in the lipid droplet. The enzyme catalyses 3-dehydro-4alpha-methylzymosterol + NADPH + H(+) = 4alpha-methylzymosterol + NADP(+). Its pathway is steroid biosynthesis; zymosterol biosynthesis; zymosterol from lanosterol: step 5/6. In terms of biological role, 3-keto-steroid reductase; part of the third module of ergosterol biosynthesis pathway that includes the late steps of the pathway. ERG27 is a catalytic component of the C-4 demethylation complex that catalyze the reduction of the keto group on the C-3. The third module or late pathway involves the ergosterol synthesis itself through consecutive reactions that mainly occur in the endoplasmic reticulum (ER) membrane. Firstly, the squalene synthase ERG9 catalyzes the condensation of 2 farnesyl pyrophosphate moieties to form squalene, which is the precursor of all steroids. Squalene synthase is crucial for balancing the incorporation of farnesyl diphosphate (FPP) into sterol and nonsterol isoprene synthesis. Secondly, the squalene epoxidase ERG1 catalyzes the stereospecific oxidation of squalene to (S)-2,3-epoxysqualene, which is considered to be a rate-limiting enzyme in steroid biosynthesis. Then, the lanosterol synthase ERG7 catalyzes the cyclization of (S)-2,3 oxidosqualene to lanosterol, a reaction that forms the sterol core. In the next steps, lanosterol is transformed to zymosterol through a complex process involving various demethylation, reduction and desaturation reactions. The lanosterol 14-alpha-demethylase ERG11 (also known as CYP51) catalyzes C14-demethylation of lanosterol to produce 4,4'-dimethyl cholesta-8,14,24-triene-3-beta-ol, which is critical for ergosterol biosynthesis. The C-14 reductase ERG24 reduces the C14=C15 double bond of 4,4-dimethyl-cholesta-8,14,24-trienol to produce 4,4-dimethyl-cholesta-8,24-dienol. 4,4-dimethyl-cholesta-8,24-dienol is substrate of the C-4 demethylation complex ERG25-ERG26-ERG27 in which ERG25 catalyzes the three-step monooxygenation required for the demethylation of 4,4-dimethyl and 4alpha-methylsterols, ERG26 catalyzes the oxidative decarboxylation that results in a reduction of the 3-beta-hydroxy group at the C-3 carbon to an oxo group, and ERG27 is responsible for the reduction of the keto group on the C-3. ERG28 has a role as a scaffold to help anchor ERG25, ERG26 and ERG27 to the endoplasmic reticulum and ERG29 regulates the activity of the iron-containing C4-methylsterol oxidase ERG25. Then, the sterol 24-C-methyltransferase ERG6 catalyzes the methyl transfer from S-adenosyl-methionine to the C-24 of zymosterol to form fecosterol. The C-8 sterol isomerase ERG2 catalyzes the reaction which results in unsaturation at C-7 in the B ring of sterols and thus converts fecosterol to episterol. The sterol-C5-desaturase ERG3 then catalyzes the introduction of a C-5 double bond in the B ring to produce 5-dehydroepisterol. The C-22 sterol desaturase ERG5 further converts 5-dehydroepisterol into ergosta-5,7,22,24(28)-tetraen-3beta-ol by forming the C-22(23) double bond in the sterol side chain. Finally, ergosta-5,7,22,24(28)-tetraen-3beta-ol is substrate of the C-24(28) sterol reductase ERG4 to produce ergosterol. Facilitates the association of ERG7 with lipid particles preventing its digestion in the endoplasmic reticulum and the lipid particles. This is 3-keto-steroid reductase ERG27 from Saccharomyces cerevisiae (strain ATCC 204508 / S288c) (Baker's yeast).